We begin with the raw amino-acid sequence, 418 residues long: Serine hydroxymethyltransferase (418 aa).

(6S)-5,6,7,8-tetrahydrofolate-binding positions include L121 and 125–127 (GHL). K230 carries the N6-(pyridoxal phosphate)lysine modification. 355–357 (SPF) is a binding site for (6S)-5,6,7,8-tetrahydrofolate.

This sequence belongs to the SHMT family. In terms of assembly, homodimer. It depends on pyridoxal 5'-phosphate as a cofactor.

The protein localises to the cytoplasm. The catalysed reaction is (6R)-5,10-methylene-5,6,7,8-tetrahydrofolate + glycine + H2O = (6S)-5,6,7,8-tetrahydrofolate + L-serine. It participates in one-carbon metabolism; tetrahydrofolate interconversion. It functions in the pathway amino-acid biosynthesis; glycine biosynthesis; glycine from L-serine: step 1/1. Its function is as follows. Catalyzes the reversible interconversion of serine and glycine with tetrahydrofolate (THF) serving as the one-carbon carrier. This reaction serves as the major source of one-carbon groups required for the biosynthesis of purines, thymidylate, methionine, and other important biomolecules. Also exhibits THF-independent aldolase activity toward beta-hydroxyamino acids, producing glycine and aldehydes, via a retro-aldol mechanism. This Streptococcus pyogenes serotype M49 (strain NZ131) protein is Serine hydroxymethyltransferase.